The chain runs to 269 residues: Chymotrypsin-like elastase family member 2A (269 aa).

The signal sequence occupies residues 1 to 16; the sequence is MIRTLLLSTLVAGALS. The propeptide at 17–28 is activation peptide; that stretch reads CGDPTYPPYVTR. The 239-residue stretch at 29-267 folds into the Peptidase S1 domain; sequence VVGGEEARPN…YIDWINSVIA (239 aa). The cysteines at positions 58 and 74 are disulfide-linked. Residues His73 and Asp121 each act as charge relay system in the active site. 3 disulfide bridges follow: Cys155/Cys222, Cys186/Cys202, and Cys212/Cys243. Catalysis depends on Ser216, which acts as the Charge relay system.

It belongs to the peptidase S1 family. Elastase subfamily. Interacts with CPA1. Interacts with SERPINA1. Expressed in pancreas. Not detected in keratinocytes. Detected in exocrine secretions of the pancreas (at protein level). Also expressed in a small fraction of cells in pancreatic islets, adrenal cortex, intestinal glands and colonic lymphoid follicles (at protein level). Detected in plasma.

It localises to the secreted. The enzyme catalyses Preferential cleavage: Leu-|-Xaa, Met-|-Xaa and Phe-|-Xaa. Hydrolyzes elastin.. Its function is as follows. Elastase that enhances insulin signaling and might have a physiologic role in cellular glucose metabolism. Circulates in plasma and reduces platelet hyperactivation, triggers both insulin secretion and degradation, and increases insulin sensitivity. The polypeptide is Chymotrypsin-like elastase family member 2A (Homo sapiens (Human)).